A 491-amino-acid polypeptide reads, in one-letter code: MNDLTFITPEINWTVLGMPAFLMIWAMLVLIVDMFTSDRRVLLTLSLIGLGVTAALGALDYGSTISGFSDMLVFDKFGVLVNWILLAGTALTLLIAFDYMPRQNLSQGEFYPLVLFATSGMLFLVQSTDLVTIFIGVETLSIALYVLTGFAVPQFKSGEAAIKYLLLGGFAAGFLVYGIALIYGMTGKTNLAQIANELSTWQSTGKALDDPILLAGVGFVLIALGFKVSMFPFHAWTPDVYEGAPTPVTAYMSVATKGAAFAAMLRFLNVAFPALKPEWQLLFGLFAAATMAYGNIVAVAQTNLKRMLAYSSIAHAGYMLLGVLAASEKGISAFTVYLLAYTLTNLGAFAVLIALENRGMPVFELSDLRGLGKRSPLLALAMTVFMFSLAGVPPTAGFASKFGIFRAAWDANLDYLAIIGVVTSVISAFFYLRVIVTMWMRDTEATEPQPTYATASLSLGVIVAVIGIIAVGILPNIFTDLAKALVLTVAP.

14 helical membrane-spanning segments follow: residues 15–35, 41–61, 77–97, 105–125, 130–150, 165–185, 211–231, 247–269, 279–299, 307–327, 333–353, 378–398, 416–436, and 459–479; these read VLGM…VDMF, VLLT…ALDY, FGVL…LIAF, LSQG…LFLV, LVTI…LTGF, LLLG…IYGM, PILL…VSMF, PVTA…RFLN, WQLL…IVAV, MLAY…LAAS, AFTV…AVLI, LALA…TAGF, LAII…RVIV, and LGVI…NIFT.

This sequence belongs to the complex I subunit 2 family. NDH-1 is composed of 14 different subunits. Subunits NuoA, H, J, K, L, M, N constitute the membrane sector of the complex.

The protein resides in the cell membrane. It catalyses the reaction a quinone + NADH + 5 H(+)(in) = a quinol + NAD(+) + 4 H(+)(out). NDH-1 shuttles electrons from NADH, via FMN and iron-sulfur (Fe-S) centers, to quinones in the respiratory chain. The immediate electron acceptor for the enzyme in this species is believed to be ubiquinone. Couples the redox reaction to proton translocation (for every two electrons transferred, four hydrogen ions are translocated across the cytoplasmic membrane), and thus conserves the redox energy in a proton gradient. This Herpetosiphon aurantiacus (strain ATCC 23779 / DSM 785 / 114-95) protein is NADH-quinone oxidoreductase subunit N 1.